Reading from the N-terminus, the 62-residue chain is Kininogen-1 (62 aa).

A signal peptide spans 1–22 (MDILKKSLFLVLFLGLVSFSIC). Residues 24–62 (EEKRDTEEEENDDEIEEESEEKKREAPERPPGFTPFRIY) are disordered. Residues 30-42 (EEEENDDEIEEES) show a composition bias toward acidic residues. Pro54 is modified (4-hydroxyproline; partial). A Sulfotyrosine modification is found at Tyr62.

It belongs to the frog skin active peptide (FSAP) family. Bradykinin-related peptide subfamily. Expressed by the skin glands.

It is found in the secreted. In terms of biological role, inhibits ACE with a Ki of 1.6 uM, and targets B2 bradykinin receptor (BDKRB2). Provokes contraction of smooth muscle preparation (ileum). In vivo, induces an early hyperalgesic effects in living rats after intraplantar injection. The sequence is that of Kininogen-1 from Phyllomedusa sauvagei (Sauvage's leaf frog).